We begin with the raw amino-acid sequence, 527 residues long: N-acetylglutamate synthase, mitochondrial (527 aa).

A mitochondrion-targeting transit peptide spans Met1–Arg18. The segment at Ala14–Gly91 is disordered. The amino-acid kinase domain (AAK) stretch occupies residues Leu19–Arg369. A compositionally biased stretch (basic and acidic residues) spans Ala54–Lys63. The span at Thr77–Pro89 shows a compositional bias: pro residues. In terms of domain architecture, N-acetyltransferase spans Glu368–Cys519. Residues Lys394, Lys437, and Arg467–Asn472 each bind substrate.

The protein belongs to the acetyltransferase family. In terms of assembly, homodimer. Homotetramer. In terms of processing, probably processed by mitochondrial processing peptidase (MPP). The long form has not yet been isolated. Highly expressed in the liver and small intestine. Weakly expressed in the kidney, spleen and testis.

The protein localises to the mitochondrion matrix. It catalyses the reaction L-glutamate + acetyl-CoA = N-acetyl-L-glutamate + CoA + H(+). The protein operates within amino-acid biosynthesis; L-arginine biosynthesis; N(2)-acetyl-L-ornithine from L-glutamate: step 1/4. Its activity is regulated as follows. Increased by L-arginine. Plays a role in the regulation of ureagenesis by producing the essential cofactor N-acetylglutamate (NAG), thus modulating carbamoylphosphate synthase I (CPS1) activity. The sequence is that of N-acetylglutamate synthase, mitochondrial (Nags) from Mus musculus (Mouse).